Here is a 542-residue protein sequence, read N- to C-terminus: Keratin, type II cytoskeletal 75 (542 aa).

The segment covering 1–26 (MSRQSTVTFHSGSRRGFSTASATTPT) has biased composition (polar residues). The interval 1–44 (MSRQSTVTFHSGSRRGFSTASATTPTAGRSRFSSVSVARSSGNS) is disordered. The tract at residues 1 to 139 (MSRQSTVTFH…DPTIQRVRKE (139 aa)) is head. Residues 27 to 42 (AGRSRFSSVSVARSSG) are compositionally biased toward low complexity. The segment at 140-175 (EREQIKTLNNKFASFIDKVRFLEQQNKVLETKWNLL) is coil 1A. Positions 140–453 (EREQIKTLNN…KLLEGEECRL (314 aa)) constitute an IF rod domain. A linker 1 region spans residues 176–194 (QEQGSRTVRQNLEPFFDAY). The coil 1B stretch occupies residues 195–287 (VNDLRRQLDS…VYEAELSQMQ (93 aa)). Residues 288-310 (NQVSDTSVVLSMDNNRSLDLDSI) are linker 12. A coil 2 region spans residues 311–449 (IAEVKAQYED…ATYRKLLEGE (139 aa)). The interval 450-542 (ECRLSGEGVS…TSSSRKSYKH (93 aa)) is tail. Residues 514-542 (TSSSRGPVGSGSSIKFVSSTSSSRKSYKH) form a disordered region.

This sequence belongs to the intermediate filament family. In terms of assembly, heterodimer of a type I and a type II keratin. May associate with KRT17.

In terms of biological role, plays a central role in hair and nail formation. Essential component of keratin intermediate filaments in the companion layer of the hair follicle. This is Keratin, type II cytoskeletal 75 (Krt75) from Rattus norvegicus (Rat).